We begin with the raw amino-acid sequence, 880 residues long: Valine--tRNA ligase (880 aa).

The 'HIGH' region motif lies at 49–59 (PNVTGKLHLGH). The 'KMSKS' region motif lies at 525 to 529 (KMSKS). Residue K528 coordinates ATP. A coiled-coil region spans residues 809 to 880 (LEGLINIEEE…VKARLAELKR (72 aa)).

It belongs to the class-I aminoacyl-tRNA synthetase family. ValS type 1 subfamily. Monomer.

The protein localises to the cytoplasm. The enzyme catalyses tRNA(Val) + L-valine + ATP = L-valyl-tRNA(Val) + AMP + diphosphate. Its function is as follows. Catalyzes the attachment of valine to tRNA(Val). As ValRS can inadvertently accommodate and process structurally similar amino acids such as threonine, to avoid such errors, it has a 'posttransfer' editing activity that hydrolyzes mischarged Thr-tRNA(Val) in a tRNA-dependent manner. This Geobacillus kaustophilus (strain HTA426) protein is Valine--tRNA ligase.